Reading from the N-terminus, the 214-residue chain is Imidazole glycerol phosphate synthase subunit HisH (214 aa).

The Glutamine amidotransferase type-1 domain maps to 3 to 211 (TIAVIDYDMG…VSKVIPKNLA (209 aa)). Catalysis depends on Cys-81, which acts as the Nucleophile. Active-site residues include His-186 and Glu-188.

In terms of assembly, heterodimer of HisH and HisF.

It localises to the cytoplasm. The enzyme catalyses 5-[(5-phospho-1-deoxy-D-ribulos-1-ylimino)methylamino]-1-(5-phospho-beta-D-ribosyl)imidazole-4-carboxamide + L-glutamine = D-erythro-1-(imidazol-4-yl)glycerol 3-phosphate + 5-amino-1-(5-phospho-beta-D-ribosyl)imidazole-4-carboxamide + L-glutamate + H(+). It carries out the reaction L-glutamine + H2O = L-glutamate + NH4(+). It functions in the pathway amino-acid biosynthesis; L-histidine biosynthesis; L-histidine from 5-phospho-alpha-D-ribose 1-diphosphate: step 5/9. Its function is as follows. IGPS catalyzes the conversion of PRFAR and glutamine to IGP, AICAR and glutamate. The HisH subunit catalyzes the hydrolysis of glutamine to glutamate and ammonia as part of the synthesis of IGP and AICAR. The resulting ammonia molecule is channeled to the active site of HisF. The sequence is that of Imidazole glycerol phosphate synthase subunit HisH from Trichodesmium erythraeum (strain IMS101).